Reading from the N-terminus, the 397-residue chain is CCA-adding enzyme (397 aa).

ATP is bound by residues G26 and R29. CTP-binding residues include G26 and R29. The Mg(2+) site is built by D39 and D41. R110, D153, R156, R159, and R162 together coordinate ATP. CTP-binding residues include R110, D153, R156, R159, and R162.

It belongs to the tRNA nucleotidyltransferase/poly(A) polymerase family. Bacterial CCA-adding enzyme type 3 subfamily. As to quaternary structure, homodimer. Mg(2+) is required as a cofactor.

It carries out the reaction a tRNA precursor + 2 CTP + ATP = a tRNA with a 3' CCA end + 3 diphosphate. It catalyses the reaction a tRNA with a 3' CCA end + 2 CTP + ATP = a tRNA with a 3' CCACCA end + 3 diphosphate. Its function is as follows. Catalyzes the addition and repair of the essential 3'-terminal CCA sequence in tRNAs without using a nucleic acid template. Adds these three nucleotides in the order of C, C, and A to the tRNA nucleotide-73, using CTP and ATP as substrates and producing inorganic pyrophosphate. tRNA 3'-terminal CCA addition is required both for tRNA processing and repair. Also involved in tRNA surveillance by mediating tandem CCA addition to generate a CCACCA at the 3' terminus of unstable tRNAs. While stable tRNAs receive only 3'-terminal CCA, unstable tRNAs are marked with CCACCA and rapidly degraded. In Bacillus cereus (strain Q1), this protein is CCA-adding enzyme.